The following is a 186-amino-acid chain: Peptidyl-tRNA hydrolase (186 aa).

Tyr14 lines the tRNA pocket. The Proton acceptor role is filled by His19. Residues Tyr64, Asn66, and Asn112 each contribute to the tRNA site.

The protein belongs to the PTH family. In terms of assembly, monomer.

It is found in the cytoplasm. It catalyses the reaction an N-acyl-L-alpha-aminoacyl-tRNA + H2O = an N-acyl-L-amino acid + a tRNA + H(+). Functionally, hydrolyzes ribosome-free peptidyl-tRNAs (with 1 or more amino acids incorporated), which drop off the ribosome during protein synthesis, or as a result of ribosome stalling. Catalyzes the release of premature peptidyl moieties from peptidyl-tRNA molecules trapped in stalled 50S ribosomal subunits, and thus maintains levels of free tRNAs and 50S ribosomes. This Geobacillus thermodenitrificans (strain NG80-2) protein is Peptidyl-tRNA hydrolase.